A 318-amino-acid chain; its full sequence is Nitrate reductase [NADH] (318 aa).

The region spanning 216 to 291 is the Cytochrome b5 heme-binding domain; the sequence is AKSFTMAEVE…LLEYYIGELA (76 aa). The heme site is built by histidine 251 and histidine 274.

Belongs to the nitrate reductase family. As to quaternary structure, homodimer. The cofactor is FAD. Heme is required as a cofactor. Mo-molybdopterin serves as cofactor.

The catalysed reaction is nitrite + NAD(+) + H2O = nitrate + NADH + H(+). Its function is as follows. Nitrate reductase is a key enzyme involved in the first step of nitrate assimilation in plants, fungi and bacteria. This chain is Nitrate reductase [NADH], found in Chlorella vulgaris (Green alga).